A 401-amino-acid chain; its full sequence is MFAATRLSRLRHDTSRILSHWILPLGWLALLTGMFWVGDRSDYHRLFYILLAAPTLLYVILQPRLLRPLTGSPLFIAFLAFSSYMMLSLSWSTPENSTGSLLKRPLYIALLFFCAAILALEAPLRLKTATWLAALGAVISAAATLLRYYWDANPLRLTGYGALYNPLLSAHVYGAFTALWLAYWMQSRPILAPLPLISLALLGGLLIATGSRTPLVGLTAALMWLVLAGDRKKALIALALALAGALLGYILYPEVITQRGASFRPEIWADALRQISEHPWLGHGYDHPMRIVLSNGMLLADPHNIELGVLFAGGIIGLLLWVAIYALAFGFSWKNRKSPAVLLASTWLVFGLAAGLTEGNAFLPRPKEHWFLIWIPMALLYALWIQQRFAASRRGEDIAAP.

The Cytoplasmic portion of the chain corresponds to 1–20 (MFAATRLSRLRHDTSRILSH). Residues 21-37 (WILPLGWLALLTGMFWV) form a helical membrane-spanning segment. Over 38 to 42 (GDRSD) the chain is Periplasmic. The chain crosses the membrane as a helical span at residues 43–61 (YHRLFYILLAAPTLLYVIL). At 62-72 (QPRLLRPLTGS) the chain is on the cytoplasmic side. A helical membrane pass occupies residues 73–92 (PLFIAFLAFSSYMMLSLSWS). At 93–103 (TPENSTGSLLK) the chain is on the periplasmic side. A helical membrane pass occupies residues 104 to 122 (RPLYIALLFFCAAILALEA). The Cytoplasmic segment spans residues 123-129 (PLRLKTA). A helical transmembrane segment spans residues 130–150 (TWLAALGAVISAAATLLRYYW). The Periplasmic portion of the chain corresponds to 151–161 (DANPLRLTGYG). Residues 162-183 (ALYNPLLSAHVYGAFTALWLAY) traverse the membrane as a helical segment. The Cytoplasmic segment spans residues 184–189 (WMQSRP). A helical membrane pass occupies residues 190–208 (ILAPLPLISLALLGGLLIA). Residues 209–212 (TGSR) lie on the Periplasmic side of the membrane. Residues 213-229 (TPLVGLTAALMWLVLAG) traverse the membrane as a helical segment. At 230 to 234 (DRKKA) the chain is on the cytoplasmic side. A helical membrane pass occupies residues 235–252 (LIALALALAGALLGYILY). The Periplasmic segment spans residues 253 to 306 (PEVITQRGASFRPEIWADALRQISEHPWLGHGYDHPMRIVLSNGMLLADPHNIE). Positions 258–319 (QRGASFRPEI…LFAGGIIGLL (62 aa)) are WZY-C. A helical transmembrane segment spans residues 307–331 (LGVLFAGGIIGLLLWVAIYALAFGF). Residues 332-339 (SWKNRKSP) are Cytoplasmic-facing. Residues 340–357 (AVLLASTWLVFGLAAGLT) form a helical membrane-spanning segment. Topologically, residues 358-368 (EGNAFLPRPKE) are periplasmic. Residues 369–385 (HWFLIWIPMALLYALWI) form a helical membrane-spanning segment. At 386–401 (QQRFAASRRGEDIAAP) the chain is on the cytoplasmic side.

This sequence belongs to the O-antigen ligase family. As to quaternary structure, homodimer.

It localises to the cell inner membrane. The enzyme catalyses a lipid-linked O antigen + a lipid A-core oligosaccharide = a lipopolysaccharide + a polyisoprenyl diphosphate.. It participates in bacterial outer membrane biogenesis; lipopolysaccharide biosynthesis. With respect to regulation, activity does not require ATP and magnesium ions. In terms of biological role, transferase involved in the biosynthesis of the lipopolysaccharide (LPS). Catalyzes the transfer of a polymerized O-antigen molecule from its polyprenyl diphosphate membrane anchor to a terminal sugar of the lipid A-core oligosaccharide, finalizing the biosynthesis of the lipopolysaccharide. Required for the attachment of both A-band and B-band O-antigens, two forms of O-antigen produced by P.aeruginosa, onto the lipid A-core receptors. Important for cell wall integrity and motility of the bacteria. The chain is O-antigen ligase from Pseudomonas aeruginosa (strain ATCC 15692 / DSM 22644 / CIP 104116 / JCM 14847 / LMG 12228 / 1C / PRS 101 / PAO1).